Here is a 387-residue protein sequence, read N- to C-terminus: Alpha-sarcoglycan (387 aa).

Residues 1–23 (MAATLTWILLFVGLLAGLRDTKA) form the signal peptide. Topologically, residues 24–290 (QQTTLYPLVG…ATGRDFLADA (267 aa)) are extracellular. 2 N-linked (GlcNAc...) asparagine glycosylation sites follow: Asn174 and Asn246. Residues 291–311 (LVTLLVPLLVALLLTLLLAYI) form a helical membrane-spanning segment. Over 312–387 (MCCRREGQLK…AQVPLILDQH (76 aa)) the chain is Cytoplasmic. Ser377 carries the phosphoserine modification.

Belongs to the sarcoglycan alpha/epsilon family. As to quaternary structure, interacts with the syntrophin SNTA1. Cross-link to form 2 major subcomplexes: one consisting of SGCB, SGCD and SGCG and the other consisting of SGCB and SGCD. The association between SGCB and SGCG is particularly strong while SGCA is loosely associated with the other sarcoglycans. In terms of tissue distribution, strongly expressed in skeletal and heart muscle.

The protein localises to the cell membrane. Its subcellular location is the sarcolemma. It localises to the cytoplasm. It is found in the cytoskeleton. Component of the sarcoglycan complex, a subcomplex of the dystrophin-glycoprotein complex which forms a link between the F-actin cytoskeleton and the extracellular matrix. The chain is Alpha-sarcoglycan (SGCA) from Mesocricetus auratus (Golden hamster).